Consider the following 277-residue polypeptide: Prohibitin-3, mitochondrial (277 aa).

The residue at position 2 (glycine 2) is an N-acetylglycine. Over 2-6 the chain is Mitochondrial matrix; sequence GSQQA. The chain crosses the membrane as a helical; Signal-anchor for type II membrane protein span at residues 7–28; sequence AVSFLSNLAKAAFGLGTAATVL. The Mitochondrial intermembrane portion of the chain corresponds to 29–277; that stretch reads NTSLFTVDGG…GQSMLFALNR (249 aa).

This sequence belongs to the prohibitin family. As to quaternary structure, component of a prohibitin multimeric complex in mitochondrial membranes. In terms of tissue distribution, mostly expressed in proliferative tissues, including vasculature, shoot and root apical tissues. Expressed in roots, stems, leaves and flowers (at protein level).

It localises to the cell membrane. The protein resides in the mitochondrion inner membrane. Its subcellular location is the nucleus. It is found in the cytoplasm. Its function is as follows. Prohibitin probably acts as a holdase/unfoldase for the stabilization of newly synthesized mitochondrial proteins. Necessary for mitochondrial and cell metabolism and biogenesis. Required to regulate the ethylene-mediated signaling; involved in growth maintenance in the presence of ethylene. Functions in nitric oxide (NO)-mediated responses and in hydrogen peroxide-induced NO accumulation. This chain is Prohibitin-3, mitochondrial (PHB3), found in Arabidopsis thaliana (Mouse-ear cress).